The chain runs to 179 residues: Transcription factor 21 (179 aa).

The interval 20 to 87 (CDGLKMDSNK…QVQRNAANAR (68 aa)) is disordered. The span at 33–46 (TSNESTEESSNCEN) shows a compositional bias: low complexity. The span at 70–80 (SGVSQEGKQVQ) shows a compositional bias: polar residues. Positions 79-131 (VQRNAANARERARMRVLSKAFSRLKTTLPWVPPDTKLSKLDTLRLASSYIAHL) constitute a bHLH domain.

Efficient DNA binding requires dimerization with another bHLH protein. Forms a heterodimer with TCF3 and binds the E box (5'-CANNTG-3').

Its subcellular location is the nucleus. In terms of biological role, involved in epithelial-mesenchymal interactions in kidney and lung morphogenesis that include epithelial differentiation and branching morphogenesis. May play a role in the specification or differentiation of one or more subsets of epicardial cell types. The chain is Transcription factor 21 (TCF21) from Homo sapiens (Human).